The sequence spans 192 residues: Probable cobalt-precorrin-6B C(15)-methyltransferase (decarboxylating) (192 aa).

Residues Thr-17, 41 to 45 (GCGTG), Asp-62, and Ala-91 contribute to the S-adenosyl-L-methionine site.

Belongs to the methyltransferase superfamily. Archaeal-type CbiT family. In terms of assembly, homotetramer.

It catalyses the reaction Co-precorrin-6B + S-adenosyl-L-methionine = Co-precorrin-7 + S-adenosyl-L-homocysteine + CO2. The protein operates within cofactor biosynthesis; adenosylcobalamin biosynthesis; cob(II)yrinate a,c-diamide from sirohydrochlorin (anaerobic route): step 8/10. In terms of biological role, catalyzes the methylation of C-15 in cobalt-precorrin-6B followed by the decarboxylation of C-12 to form cobalt-precorrin-7. This Methanothermobacter thermautotrophicus (strain ATCC 29096 / DSM 1053 / JCM 10044 / NBRC 100330 / Delta H) (Methanobacterium thermoautotrophicum) protein is Probable cobalt-precorrin-6B C(15)-methyltransferase (decarboxylating).